A 343-amino-acid chain; its full sequence is Putative dihydroflavonol 4-reductase (343 aa).

Tyr-150 provides a ligand contact to NADP(+).

It belongs to the NAD(P)-dependent epimerase/dehydratase family. Dihydroflavonol-4-reductase subfamily.

The catalysed reaction is a (2R,3S,4S)-leucoanthocyanidin + NADP(+) = a (2R,3R)-dihydroflavonol + NADPH + H(+). The protein operates within secondary metabolite biosynthesis; flavonoid biosynthesis. The polypeptide is Putative dihydroflavonol 4-reductase (dfrA) (Synechocystis sp. (strain ATCC 27184 / PCC 6803 / Kazusa)).